The following is a 194-amino-acid chain: Putative manganese efflux pump MntP (194 aa).

A run of 6 helical transmembrane segments spans residues 3–23, 37–57, 65–85, 112–132, 137–157, and 170–190; these read PITI…AAIG, LYVA…GWLL, IAAF…IHMI, LAAT…SLAF, IGIV…FGVM, and AEIV…YEHL.

This sequence belongs to the MntP (TC 9.B.29) family.

The protein localises to the cell inner membrane. In terms of biological role, probably functions as a manganese efflux pump. This Xylella fastidiosa (strain M12) protein is Putative manganese efflux pump MntP.